A 114-amino-acid chain; its full sequence is Ribonuclease P protein component (114 aa).

This sequence belongs to the RnpA family. Consists of a catalytic RNA component (M1 or rnpB) and a protein subunit.

The enzyme catalyses Endonucleolytic cleavage of RNA, removing 5'-extranucleotides from tRNA precursor.. RNaseP catalyzes the removal of the 5'-leader sequence from pre-tRNA to produce the mature 5'-terminus. It can also cleave other RNA substrates such as 4.5S RNA. The protein component plays an auxiliary but essential role in vivo by binding to the 5'-leader sequence and broadening the substrate specificity of the ribozyme. The polypeptide is Ribonuclease P protein component (Legionella pneumophila (strain Lens)).